Here is a 447-residue protein sequence, read N- to C-terminus: Phosphoglucosamine mutase (447 aa).

Residue serine 106 is the Phosphoserine intermediate of the active site. Residues serine 106, aspartate 245, aspartate 247, and aspartate 249 each contribute to the Mg(2+) site. Position 106 is a phosphoserine (serine 106).

This sequence belongs to the phosphohexose mutase family. Mg(2+) is required as a cofactor. In terms of processing, activated by phosphorylation.

The catalysed reaction is alpha-D-glucosamine 1-phosphate = D-glucosamine 6-phosphate. Catalyzes the conversion of glucosamine-6-phosphate to glucosamine-1-phosphate. The sequence is that of Phosphoglucosamine mutase from Cupriavidus taiwanensis (strain DSM 17343 / BCRC 17206 / CCUG 44338 / CIP 107171 / LMG 19424 / R1) (Ralstonia taiwanensis (strain LMG 19424)).